A 270-amino-acid polypeptide reads, in one-letter code: ATP synthase subunit a (270 aa).

5 consecutive transmembrane segments (helical) span residues 38–58, 98–118, 143–163, 208–228, and 239–259; these read VHID…GIFY, IAPL…MDLV, DVNI…YYSI, LFGN…MLPW, and AIFH…LTIV.

It belongs to the ATPase A chain family. F-type ATPases have 2 components, CF(1) - the catalytic core - and CF(0) - the membrane proton channel. CF(1) has five subunits: alpha(3), beta(3), gamma(1), delta(1), epsilon(1). CF(0) has three main subunits: a(1), b(2) and c(9-12). The alpha and beta chains form an alternating ring which encloses part of the gamma chain. CF(1) is attached to CF(0) by a central stalk formed by the gamma and epsilon chains, while a peripheral stalk is formed by the delta and b chains.

The protein resides in the cell inner membrane. Its function is as follows. Key component of the proton channel; it plays a direct role in the translocation of protons across the membrane. This chain is ATP synthase subunit a, found in Vibrio alginolyticus.